Consider the following 362-residue polypeptide: Chorismate synthase (362 aa).

Residues R48 and R54 each contribute to the NADP(+) site. FMN-binding positions include 131–133 (RSS), 243–244 (NA), G287, 302–306 (KPTSS), and R328.

It belongs to the chorismate synthase family. Homotetramer. It depends on FMNH2 as a cofactor.

The catalysed reaction is 5-O-(1-carboxyvinyl)-3-phosphoshikimate = chorismate + phosphate. The protein operates within metabolic intermediate biosynthesis; chorismate biosynthesis; chorismate from D-erythrose 4-phosphate and phosphoenolpyruvate: step 7/7. Catalyzes the anti-1,4-elimination of the C-3 phosphate and the C-6 proR hydrogen from 5-enolpyruvylshikimate-3-phosphate (EPSP) to yield chorismate, which is the branch point compound that serves as the starting substrate for the three terminal pathways of aromatic amino acid biosynthesis. This reaction introduces a second double bond into the aromatic ring system. The chain is Chorismate synthase from Bradyrhizobium diazoefficiens (strain JCM 10833 / BCRC 13528 / IAM 13628 / NBRC 14792 / USDA 110).